Consider the following 7126-residue polypeptide: Replicase polyprotein 1ab (7126 aa).

Residues 25–151 (RSDHVACTVP…EHTFLLRKNG (127 aa)) enclose the CoV Nsp1 globular domain. One can recognise a BetaCoV Nsp1 C-terminal domain in the interval 167–195 (TPYVEILDDLEADPTGKYSQNLLKKLIGG). Positions 197 to 472 (CIPVDQYMCG…WDKVVETANL (276 aa)) constitute a CoV Nsp2 N-terminal domain. Positions 339, 342, 358, and 360 each coordinate Zn(2+). The segment at 339–360 (CNACGRGTWCTGNAIQGFACDC) is C4. Residues 478–712 (QHSLNFCQQF…LDIMSKAMKL (235 aa)) form the CoV Nsp2 middle domain. One can recognise a CoV Nsp2 C-terminal domain in the interval 714 to 847 (HTNVSWAGTK…VSTLFRLKGG (134 aa)). The Ubiquitin-like 1 domain occupies 851-960 (KKVTFGDVNT…MTFSINPVED (110 aa)). The segment at 1039–1061 (AQEPSVESTDSTPSTSTVVSEND) is disordered. A compositionally biased stretch (low complexity) spans 1041 to 1059 (EPSVESTDSTPSTSTVVSE). Macro domains follow at residues 1159-1328 (DLSK…KPDG) and 1329-1453 (LVYS…AIQT). The DPUP domain occupies 1453 to 1526 (TPETAFINNV…LEACRAYLTS (74 aa)). In terms of domain architecture, Ubiquitin-like 2 spans 1531 to 1586 (QVNIEVLVTIDGVNFRTVILNDATTFRKQLGATFYKGVDISDALPTVKMGGESLFV). The Peptidase C16 domain maps to 1600–1871 (EYYGTSDVTF…KVEVNPDLSN (272 aa)). C1641 acts as the For PL-PRO activity in catalysis. C1721, C1724, C1756, and C1758 together coordinate Zn(2+). The C4-type zinc finger occupies 1721–1758 (CTVCGIRDIEYTGMRACVYAGVNSMEELQSVFNETCVC). Active-site for PL-PRO activity residues include H1807 and D1822. A Nucleic acid-binding domain is found at 1885–2002 (TIKYSPATIL…QLYDVAPIVL (118 aa)). A G2M domain is found at 2019–2140 (PNVPVVEDVS…AKITVTATTA (122 aa)). Helical transmembrane passes span 2119 to 2139 (VLLGASSLFASFAKITVTATT), 2152 to 2172 (FVVNYGVLQNMFLFLKMLFFL), and 2229 to 2249 (LFLLLCTTILLLSSIYHLVIF). The interval 2119–2402 (VLLGASSLFA…VTHIPLHGLV (284 aa)) is HD1. One can recognise a 3Ecto domain in the interval 2266 to 2332 (LAMYKEVRSY…LQMLQTHITS (67 aa)). 2 cysteine pairs are disulfide-bonded: C2282–C2310 and C2300–C2307. 3 consecutive transmembrane segments (helical) span residues 2333–2353 (YVLNIDWIWFALEFFLAYVLY), 2357–2377 (FNVLLLVVTAQYFFAYTSAFV), and 2382–2402 (YNYIVSGLFFLVTHIPLHGLV). A Y1 region spans residues 2416 to 2506 (KFYSHVINGC…TLRRLIKPTD (91 aa)). The region spanning 2416-2789 (KFYSHVINGC…LSVKFSATKI (374 aa)) is the CoV Nsp3 Y domain. Residues H2420, C2425, C2430, C2433, C2466, H2469, C2473, and C2476 each contribute to the Zn(2+) site. The segment at 2420–2433 (HVINGCKDTACLLC) is ZF1. Residues 2466 to 2476 (CCKHNWNCVEC) are ZF2. The Y2 stretch occupies residues 2507 to 2605 (QSHYYVDSVV…LVDVNLVTTV (99 aa)). Positions 2507 to 2789 (QSHYYVDSVV…LSVKFSATKI (283 aa)) are coV-Y. Residues 2606–2688 (GDSREIAIKM…DALQYAHKND (83 aa)) are Y3. The interval 2689 to 2789 (IQLTTECYNN…LSVKFSATKI (101 aa)) is Y4. 4 consecutive transmembrane segments (helical) span residues 2807–2827 (GYCILTLFVFTVAVLSWFCLP), 3079–3099 (STSLAMGLVLCVFLTAAFYYI), 3112–3132 (CAVVAVVAALLNSLCLCFIVA), and 3156–3176 (AFIMHISWYVMFGTVVPIWML). Residues 2807-3176 (GYCILTLFVF…FGTVVPIWML (370 aa)) form an HD2 region. Residues 3202–3298 (VFTDGKLNCS…NCSVTSSVLQ (97 aa)) form the Nsp4C domain. Residues 3299–3604 (SGLVKMSAPS…NMQVMGVVMQ (306 aa)) enclose the Peptidase C30 domain. Active-site for 3CL-PRO activity residues include H3339 and C3446. 7 helical membrane-spanning segments follow: residues 3610 to 3630 (ISYGFMHWLMSTLVLAYVSVM), 3644 to 3664 (TIPTQMTPLLFGFMACVMFTV), 3669 to 3689 (TFLSLFLLPVALCLTYANIVY), 3714 to 3734 (RTTHLDFGLYISLSFVLAIIV), 3742 to 3762 (MSNLALALCSGVMWFYTYVIG), 3791 to 3811 (LAKFISGLVFLYAPHLGFILP), and 3815 to 3835 (LVLLIYLCLGYMCTMYFGVFS). An HD3 region spans residues 3610–3835 (ISYGFMHWLM…MCTMYFGVFS (226 aa)). In terms of domain architecture, RdRp Nsp7 cofactor spans 3897 to 3979 (SKLTDLKCTS…DLFENSSVLQ (83 aa)). The RdRp Nsp8 cofactor domain maps to 3980 to 4178 (ATLTEFSHLA…RASSSAVKLQ (199 aa)). The Nsp9 ssRNA-binding domain occupies 4179–4288 (NNEIHPKGLK…GHIAATVRLQ (110 aa)). One can recognise an ExoN/MTase coactivator domain in the interval 4289–4427 (AGANTEFASN…DALRNNTVPQ (139 aa)). Zn(2+) contacts are provided by C4362, C4365, H4371, C4378, C4404, C4407, C4415, and C4417. 2 zinc fingers span residues 4362-4378 (CLYCRAHIEHPDVSGVC) and 4404-4417 (CNVCQYWVGYGCNC). A NiRAN domain is found at 4433–4690 (FLNRVRGSSV…AAETHKDCDF (258 aa)). Positions 4638 and 4647 each coordinate Mn(2+). The Nsp12 Interface domain maps to 4695–4793 (IEWLLLEYDY…MNMDVNIHRH (99 aa)). Zn(2+) contacts are provided by H4724, C4730, C4735, C4739, and C4916. A Nsp12 RNA-dependent RNA polymerase domain is found at 4794–5361 (RLALKELMMY…DLYSSPTTLQ (568 aa)). Residues 4796-5010 (ALKELMMYAA…HQKMLKSMAA (215 aa)) form a rdRp Fingers N-ter region. Residues 5011 to 5049 (TRGATCVIGTTKFYGGWDFMLKTLYKDVESPHLMGWDYP) are rdRp Palm N-ter. The RdRp catalytic domain occupies 5041-5203 (PHLMGWDYPK…CYNSDYAAKG (163 aa)). The segment at 5050–5108 (KCDRAMPNMCRILASLILARKHSTCCTNSDRFYRLANECAQVLSEYVLCGGGYYVKPGG) is rdRp Fingers C-ter. Positions 5071, 5074, and 5075 each coordinate Zn(2+). The tract at residues 5109-5244 (TSSGDATTAY…EKGPHEFCSQ (136 aa)) is rdRp Palm C-ter. Residues S5188, D5189, and D5190 contribute to the active site. A rdRp Thumb region spans residues 5245–5361 (HTLYIKDGDD…DLYSSPTTLQ (117 aa)). The region spanning 5362-5474 (AVGSCVVCHS…MEFNRLATCD (113 aa)) is the CV ZBD domain. The Zn(2+) site is built by C5366, C5369, C5377, C5380, C5387, C5390, H5394, H5400, C5411, C5416, C5433, and H5436. A (+)RNA virus helicase ATP-binding domain is found at 5618-5799 (TVPEEFANHV…MCNLGPDIFL (182 aa)). Residue 5643–5650 (GPPGTGKS) participates in ATP binding. The (+)RNA virus helicase C-terminal domain maps to 5800–5974 (SVCYRCPKEI…GLFKDCSRED (175 aa)). Positions 6031-6246 (LFITRDEAIR…RCLAIYDCFI (216 aa)) constitute an ExoN domain. Residues D6049, E6051, and E6150 contribute to the active site. 7 residues coordinate Zn(2+): C6166, C6169, C6185, H6188, H6216, C6220, and H6223. Catalysis depends on residues H6227 and D6232. Position 6238 (C6238) interacts with Zn(2+). An N7-MTase domain is found at 6255–6482 (YPYISHEQKL…NLWSTFVKVQ (228 aa)). 6290–6296 (DIGNPKG) is an S-adenosyl-L-methionine binding site. The segment at 6368 to 6382 (CNGGSLYVNKHAFHT) is gpppA-binding. Residues C6406, C6428, C6439, and H6442 each coordinate Zn(2+). Positions 6483–6543 (GLENIAFNVI…NVAFELYAKR (61 aa)) constitute a Nsp15 N-terminal oligomerization domain. An AV-Nsp11N/CoV-Nsp15M domain is found at 6544-6665 (AVRSHPDLNL…LYKKVNNEFV (122 aa)). In terms of domain architecture, NendoU spans 6682–6821 (TALTPMEEDF…KDGKVQTFYP (140 aa)). Residues H6712, H6727, K6767, K6870, D6954, K6994, and E7027 contribute to the active site. Positions 6826 to 7120 (TNDWKPGLTM…TLNVSTDVLV (295 aa)) constitute a Nidovirus-type SAM-dependent 2'-O-MTase domain.

The protein belongs to the coronaviruses polyprotein 1ab family. In terms of assembly, interacts with host PHB and PHB2. As to quaternary structure, interacts with papain-like protease nsp3 and non-structural protein 6. Monomer. Homodimer. Only the homodimer shows catalytic activity. In terms of assembly, interacts with nsp8 and nsp12 to form the replication-transcription complex (RTC): nsp12, nsp7, two subunits of nsp8, and up to two subunits of nsp13. As to quaternary structure, interacts with nsp7, nsp13 and nsp12 to form the replication-transcription complex (RTC): nsp12, nsp7, two subunits of nsp8, and up to two subunits of nsp13. Interacts with nsp12. In terms of assembly, interacts with proofreading exoribonuclease nsp14 and 2'-O-methyltransferase nsp16; these interactions enhance nsp14 and nsp16 enzymatic activities. As to quaternary structure, interacts with nsp7 and nsp8 to form the replication-transcription complex (RTC): nsp12, nsp7, two subunits of nsp8, and up to two subunits of nsp13. Interacts with nsp9. Interacts with nsp8 to form the replication-transcription complex (RTC): nsp12, nsp7, two subunits of nsp8, and up to two subunits of nsp13. Mn(2+) serves as cofactor. Mg(2+) is required as a cofactor. Specific enzymatic cleavages in vivo by its own proteases yield mature proteins. 3CL-PRO and PL-PRO proteinases are autocatalytically processed.

It is found in the host membrane. Its subcellular location is the host cytoplasm. The protein localises to the host perinuclear region. The protein resides in the host endoplasmic reticulum-Golgi intermediate compartment. The enzyme catalyses ATP + H2O = ADP + phosphate + H(+). It carries out the reaction RNA(n) + a ribonucleoside 5'-triphosphate = RNA(n+1) + diphosphate. The catalysed reaction is Thiol-dependent hydrolysis of ester, thioester, amide, peptide and isopeptide bonds formed by the C-terminal Gly of ubiquitin (a 76-residue protein attached to proteins as an intracellular targeting signal).. It catalyses the reaction a 5'-end (N(7)-methyl 5'-triphosphoguanosine)-ribonucleoside in mRNA + S-adenosyl-L-methionine = a 5'-end (N(7)-methyl 5'-triphosphoguanosine)-(2'-O-methyl-ribonucleoside) in mRNA + S-adenosyl-L-homocysteine + H(+). The enzyme catalyses uridylyl-uridylyl-ribonucleotide-RNA = a 3'-end uridylyl-2',3'-cyclophospho-uridine-RNA + a 5'-end dephospho-ribonucleoside-RNA. It carries out the reaction a 5'-end diphospho-ribonucleoside in mRNA + GTP + H(+) = a 5'-end (5'-triphosphoguanosine)-ribonucleoside in mRNA + diphosphate. The catalysed reaction is a 5'-end (5'-triphosphoguanosine)-ribonucleoside in mRNA + S-adenosyl-L-methionine = a 5'-end (N(7)-methyl 5'-triphosphoguanosine)-ribonucleoside in mRNA + S-adenosyl-L-homocysteine. In terms of biological role, the replicase polyprotein of coronaviruses is a multifunctional protein: it contains the activities necessary for the transcription of negative stranded RNA, leader RNA, subgenomic mRNAs and progeny virion RNA as well as proteinases responsible for the cleavage of the polyprotein into functional products. Its function is as follows. Inhibits host translation by interacting with the 40S ribosomal subunit. The nsp1-40S ribosome complex further induces an endonucleolytic cleavage near the 5'UTR of host mRNAs, targeting them for degradation. Viral mRNAs are not susceptible to nsp1-mediated endonucleolytic RNA cleavage thanks to the presence of a 5'-end leader sequence and are therefore protected from degradation. By suppressing host gene expression, nsp1 facilitates efficient viral gene expression in infected cells and evasion from host immune response. Functionally, may play a role in the modulation of host cell survival signaling pathway by interacting with host PHB and PHB2. Indeed, these two proteins play a role in maintaining the functional integrity of the mitochondria and protecting cells from various stresses. Responsible for the cleavages located at the N-terminus of the replicase polyprotein. In addition, PL-PRO possesses a deubiquitinating/deISGylating activity and processes both 'Lys-48'- and 'Lys-63'-linked polyubiquitin chains from cellular substrates. Participates together with nsp4 in the assembly of virally-induced cytoplasmic double-membrane vesicles necessary for viral replication. Antagonizes innate immune induction of type I interferon by blocking the phosphorylation, dimerization and subsequent nuclear translocation of host IRF3. Also prevents host NF-kappa-B signaling. In terms of biological role, participates in the assembly of virally-induced cytoplasmic double-membrane vesicles necessary for viral replication. Its function is as follows. Cleaves the C-terminus of replicase polyprotein at 11 sites. Recognizes substrates containing the core sequence [ILMVF]-Q-|-[SGACN]. Also able to bind an ADP-ribose-1''-phosphate (ADRP). Functionally, plays a role in the initial induction of autophagosomes from host endoplasmic reticulum. Later, limits the expansion of these phagosomes that are no longer able to deliver viral components to lysosomes. Forms a hexadecamer with nsp8 (8 subunits of each) that may participate in viral replication by acting as a primase. Alternatively, may synthesize substantially longer products than oligonucleotide primers. In terms of biological role, forms a hexadecamer with nsp7 (8 subunits of each) that may participate in viral replication by acting as a primase. Alternatively, may synthesize substantially longer products than oligonucleotide primers. Its function is as follows. Forms a primer, NSP9-pU, which is utilized by the polymerase for the initiation of RNA chains. Interacts with ribosome signal recognition particle RNA (SRP). Together with NSP8, suppress protein integration into the cell membrane, thereby disrupting host immune defenses. Functionally, plays a pivotal role in viral transcription by stimulating both nsp14 3'-5' exoribonuclease and nsp16 2'-O-methyltransferase activities. Therefore plays an essential role in viral mRNAs cap methylation. RNA-directed RNA polymerase that catalyzes the transcription of viral genomic and subgenomic RNAs. Acts in complex with nsp7 and nsp8 to transcribe both the minus and positive strands of genomic RNA. The kinase-like NiRAN domain of NSP12 attaches one or more nucleotides to the amino terminus of NSP9, forming a covalent RNA-protein intermediate that serves as transcription/replication primer. Subgenomic RNAs (sgRNAs) are formed by discontinuous transcription: The polymerase has the ability to pause at transcription-regulating sequences (TRS) and jump to the leader TRS, resulting in a major deletion. This creates a series of subgenomic RNAs that are replicated, transcribed and translated. In addition, Nsp12 is a subunit of the viral RNA capping enzyme that catalyzes the RNA guanylyltransferase reaction for genomic and sub-genomic RNAs. Subsequently, the NiRAN domain transfers RNA to GDP, and forms the core cap structure GpppA-RNA. In terms of biological role, multi-functional protein with a zinc-binding domain in N-terminus displaying RNA and DNA duplex-unwinding activities with 5' to 3' polarity. Activity of helicase is dependent on magnesium. Its function is as follows. Plays a role in viral RNA synthesis through two distinct activities. The N7-guanine methyltransferase activity plays a role in the formation of the cap structure GpppA-RNA. The proofreading exoribonuclease reduces the sensitivity of the virus to RNA mutagens during replication. This activity acts on both ssRNA and dsRNA in a 3'-5' direction. Functionally, plays a role in viral transcription/replication and prevents the simultaneous activation of host cell dsRNA sensors, such as MDA5/IFIH1, OAS, and PKR. Acts by degrading the 5'-polyuridines generated during replication of the poly(A) region of viral genomic and subgenomic RNAs. Catalyzes a two-step reaction in which a 2'3'-cyclic phosphate (2'3'-cP) is first generated by 2'-O transesterification, which is then hydrolyzed to a 3'-phosphate (3'-P). If not degraded, poly(U) RNA would hybridize with poly(A) RNA tails and activate host dsRNA sensors. Methyltransferase that mediates mRNA cap 2'-O-ribose methylation to the 5'-cap structure of viral mRNAs. N7-methyl guanosine cap is a prerequisite for binding of nsp16. Therefore plays an essential role in viral mRNAs cap methylation which is essential to evade immune system. The protein is Replicase polyprotein 1ab (rep) of Bat coronavirus 133/2005 (BtCoV).